A 63-amino-acid polypeptide reads, in one-letter code: Small ribosomal subunit protein eS30 (63 aa).

The tract at residues 1–33 (MGKVHGSLARAGKVKSQTPKVEKQEKPKKPQGR) is disordered.

The protein belongs to the eukaryotic ribosomal protein eS30 family. In terms of assembly, component of the small ribosomal subunit. Mature ribosomes consist of a small (40S) and a large (60S) subunit. The 40S subunit contains about 32 different proteins and 1 molecule of RNA (18S). The 60S subunit contains 45 different proteins and 3 molecules of RNA (25S, 5.8S and 5S).

It is found in the cytoplasm. Functionally, component of the ribosome, a large ribonucleoprotein complex responsible for the synthesis of proteins in the cell. The small ribosomal subunit (SSU) binds messenger RNAs (mRNAs) and translates the encoded message by selecting cognate aminoacyl-transfer RNA (tRNA) molecules. The large subunit (LSU) contains the ribosomal catalytic site termed the peptidyl transferase center (PTC), which catalyzes the formation of peptide bonds, thereby polymerizing the amino acids delivered by tRNAs into a polypeptide chain. The nascent polypeptides leave the ribosome through a tunnel in the LSU and interact with protein factors that function in enzymatic processing, targeting, and the membrane insertion of nascent chains at the exit of the ribosomal tunnel. The sequence is that of Small ribosomal subunit protein eS30 (RPS30) from Candida albicans (strain SC5314 / ATCC MYA-2876) (Yeast).